Here is a 954-residue protein sequence, read N- to C-terminus: Glycine dehydrogenase (decarboxylating) (954 aa).

K706 is modified (N6-(pyridoxal phosphate)lysine).

The protein belongs to the GcvP family. In terms of assembly, the glycine cleavage system is composed of four proteins: P, T, L and H. Requires pyridoxal 5'-phosphate as cofactor.

It carries out the reaction N(6)-[(R)-lipoyl]-L-lysyl-[glycine-cleavage complex H protein] + glycine + H(+) = N(6)-[(R)-S(8)-aminomethyldihydrolipoyl]-L-lysyl-[glycine-cleavage complex H protein] + CO2. In terms of biological role, the glycine cleavage system catalyzes the degradation of glycine. The P protein binds the alpha-amino group of glycine through its pyridoxal phosphate cofactor; CO(2) is released and the remaining methylamine moiety is then transferred to the lipoamide cofactor of the H protein. This Pseudomonas savastanoi pv. phaseolicola (strain 1448A / Race 6) (Pseudomonas syringae pv. phaseolicola (strain 1448A / Race 6)) protein is Glycine dehydrogenase (decarboxylating).